The following is a 168-amino-acid chain: GPI-anchored protein LLG1 (168 aa).

Positions Met1 to Ser23 are cleaved as a signal peptide. A glycan (N-linked (GlcNAc...) asparagine) is linked at Asn57. Asn144 carries the GPI-anchor amidated asparagine lipid modification. Residues Ala145–Phe168 constitute a propeptide, removed in mature form.

In terms of assembly, interacts with FER. In terms of tissue distribution, expressed in pollen, pollen tubes, sporophytic pistil tissues, in the early stages of female gametophyte development, and in unfertilized, mature ovules. Expressed in roots, lateral roots, shoots, cotyledons, petioles, developing leaves and anther filaments.

It is found in the cell membrane. Component of the FER-regulated Rho GTPase signaling complex. Acts as a chaperone and coreceptor for FER. Required for localization of FER to the plasma membrane. The sequence is that of GPI-anchored protein LLG1 from Arabidopsis thaliana (Mouse-ear cress).